The following is a 404-amino-acid chain: BRCA1-A complex subunit Abraxas 1 (404 aa).

The MPN domain maps to 7-161 (YIRVSGFVLG…YAVYRSHGSQ (155 aa)). A coiled-coil region spans residues 219–268 (MNNSLQGELKMACKKVEESERLVEKLLADVSDLRRMVNERKQELREISAD). The segment at 339 to 404 (GRLGRGGGTS…NLDVSNSPVF (66 aa)) is disordered. A compositionally biased stretch (polar residues) spans 391-404 (RNGNNLDVSNSPVF). S401 carries the post-translational modification Phosphoserine. Positions 401–404 (SPVF) match the pSXXF motif motif.

It belongs to the FAM175 family. Abraxas subfamily. In terms of assembly, component of the BRCA1-A complex. Component of the BRISC complex. Homodimer. Interacts directly (when phosphorylated at Ser-401) with brca1. The phosphorylated homodimer can interact directly with two brca1 chains, giving rise to a heterotetramer. Post-translationally, phosphorylation of Ser-401 of the pSXXF motif by ATM or ATR constitutes a specific recognition motif for the BRCT domain of BRCA1.

The protein resides in the nucleus. Involved in DNA damage response and double-strand break (DSB) repair. Component of the BRCA1-A complex, acting as a central scaffold protein that assembles the various components of the complex and mediates the recruitment of brca1. The BRCA1-A complex specifically recognizes 'Lys-63'-linked ubiquitinated histones H2A and H2AX at DNA lesion sites, leading to target the brca1-bard1 heterodimer to sites of DNA damage at DSBs. This complex also possesses deubiquitinase activity that specifically removes 'Lys-63'-linked ubiquitin on histones H2A and H2AX. This chain is BRCA1-A complex subunit Abraxas 1, found in Salmo salar (Atlantic salmon).